Consider the following 222-residue polypeptide: Probable elongation factor 1-beta (222 aa).

The disordered stretch occupies residues 90–111; the sequence is KPAADDDDDVDLFGSDDEEDEE. Positions 94-111 are enriched in acidic residues; it reads DDDDDVDLFGSDDEEDEE. Position 104 is a phosphoserine (Ser104).

This sequence belongs to the EF-1-beta/EF-1-delta family. EF-1 is composed of 4 subunits: alpha, beta, beta' and gamma. In terms of processing, phosphorylation affects the GDP/GTP exchange rate.

In terms of biological role, EF-1-beta and EF-1-delta stimulate the exchange of GDP bound to EF-1-alpha to GTP. In Drosophila melanogaster (Fruit fly), this protein is Probable elongation factor 1-beta.